Here is a 90-residue protein sequence, read N- to C-terminus: Signal recognition particle 19 kDa protein (90 aa).

It belongs to the SRP19 family. In terms of assembly, part of the signal recognition particle protein translocation system, which is composed of SRP and FtsY. Archaeal SRP consists of a 7S RNA molecule of 300 nucleotides and two protein subunits: SRP54 and SRP19.

It is found in the cytoplasm. Functionally, involved in targeting and insertion of nascent membrane proteins into the cytoplasmic membrane. Binds directly to 7S RNA and mediates binding of the 54 kDa subunit of the SRP. This is Signal recognition particle 19 kDa protein from Methanococcus aeolicus (strain ATCC BAA-1280 / DSM 17508 / OCM 812 / Nankai-3).